The sequence spans 204 residues: Large ribosomal subunit protein eL15y (204 aa).

It belongs to the eukaryotic ribosomal protein eL15 family.

This chain is Large ribosomal subunit protein eL15y (SB62), found in Picea mariana (Black spruce).